The primary structure comprises 381 residues: Succinyl-diaminopimelate desuccinylase (381 aa).

Position 72 (H72) interacts with Zn(2+). Residue D74 is part of the active site. D103 provides a ligand contact to Zn(2+). The active-site Proton acceptor is the E133. Zn(2+)-binding residues include E134, E163, and H348.

This sequence belongs to the peptidase M20A family. DapE subfamily. As to quaternary structure, homodimer. The cofactor is Zn(2+). Co(2+) serves as cofactor.

The enzyme catalyses N-succinyl-(2S,6S)-2,6-diaminopimelate + H2O = (2S,6S)-2,6-diaminopimelate + succinate. The protein operates within amino-acid biosynthesis; L-lysine biosynthesis via DAP pathway; LL-2,6-diaminopimelate from (S)-tetrahydrodipicolinate (succinylase route): step 3/3. Functionally, catalyzes the hydrolysis of N-succinyl-L,L-diaminopimelic acid (SDAP), forming succinate and LL-2,6-diaminopimelate (DAP), an intermediate involved in the bacterial biosynthesis of lysine and meso-diaminopimelic acid, an essential component of bacterial cell walls. In Anaplasma marginale (strain Florida), this protein is Succinyl-diaminopimelate desuccinylase.